The sequence spans 507 residues: Probable cytosol aminopeptidase (507 aa).

2 residues coordinate Mn(2+): K275 and D280. K287 is a catalytic residue. D298, D357, and E359 together coordinate Mn(2+). Residue R361 is part of the active site.

The protein belongs to the peptidase M17 family. Mn(2+) serves as cofactor.

The protein localises to the cytoplasm. It catalyses the reaction Release of an N-terminal amino acid, Xaa-|-Yaa-, in which Xaa is preferably Leu, but may be other amino acids including Pro although not Arg or Lys, and Yaa may be Pro. Amino acid amides and methyl esters are also readily hydrolyzed, but rates on arylamides are exceedingly low.. The enzyme catalyses Release of an N-terminal amino acid, preferentially leucine, but not glutamic or aspartic acids.. Presumably involved in the processing and regular turnover of intracellular proteins. Catalyzes the removal of unsubstituted N-terminal amino acids from various peptides. In Rhodopirellula baltica (strain DSM 10527 / NCIMB 13988 / SH1), this protein is Probable cytosol aminopeptidase.